The sequence spans 534 residues: CTP synthase (534 aa).

The tract at residues 1–265 (MKYIIVTGGV…TTQLMKHLQL (265 aa)) is amidoligase domain. Ser-12 provides a ligand contact to CTP. Residue Ser-12 coordinates UTP. 13-18 (GLGKGI) is a binding site for ATP. An L-glutamine-binding site is contributed by Tyr-53. Asp-70 contacts ATP. Residues Asp-70 and Glu-140 each coordinate Mg(2+). CTP is bound by residues 147–149 (DIE), 186–191 (KTKPSQ), and Lys-222. UTP is bound by residues 186–191 (KTKPSQ) and Lys-222. In terms of domain architecture, Glutamine amidotransferase type-1 spans 289 to 530 (KLAIVGKYTN…VAAMCKYRKE (242 aa)). Gly-352 is a binding site for L-glutamine. Cys-379 serves as the catalytic Nucleophile; for glutamine hydrolysis. L-glutamine-binding positions include 380–383 (LGMQ), Glu-403, and Arg-460. Catalysis depends on residues His-503 and Glu-505.

Belongs to the CTP synthase family. As to quaternary structure, homotetramer.

It catalyses the reaction UTP + L-glutamine + ATP + H2O = CTP + L-glutamate + ADP + phosphate + 2 H(+). The enzyme catalyses L-glutamine + H2O = L-glutamate + NH4(+). It carries out the reaction UTP + NH4(+) + ATP = CTP + ADP + phosphate + 2 H(+). Its pathway is pyrimidine metabolism; CTP biosynthesis via de novo pathway; CTP from UDP: step 2/2. With respect to regulation, allosterically activated by GTP, when glutamine is the substrate; GTP has no effect on the reaction when ammonia is the substrate. The allosteric effector GTP functions by stabilizing the protein conformation that binds the tetrahedral intermediate(s) formed during glutamine hydrolysis. Inhibited by the product CTP, via allosteric rather than competitive inhibition. Its function is as follows. Catalyzes the ATP-dependent amination of UTP to CTP with either L-glutamine or ammonia as the source of nitrogen. Regulates intracellular CTP levels through interactions with the four ribonucleotide triphosphates. This is CTP synthase from Methanosarcina barkeri (strain Fusaro / DSM 804).